We begin with the raw amino-acid sequence, 186 residues long: Threonylcarbamoyl-AMP synthase (186 aa).

A YrdC-like domain is found at Thr5 to Leu186.

Belongs to the SUA5 family. TsaC subfamily.

It localises to the cytoplasm. It carries out the reaction L-threonine + hydrogencarbonate + ATP = L-threonylcarbamoyladenylate + diphosphate + H2O. Required for the formation of a threonylcarbamoyl group on adenosine at position 37 (t(6)A37) in tRNAs that read codons beginning with adenine. Catalyzes the conversion of L-threonine, HCO(3)(-)/CO(2) and ATP to give threonylcarbamoyl-AMP (TC-AMP) as the acyladenylate intermediate, with the release of diphosphate. The protein is Threonylcarbamoyl-AMP synthase of Coxiella burnetii (strain RSA 331 / Henzerling II).